The chain runs to 142 residues: MVKPLYETKVISNGGRDGKVFSEDNTFYQDLAVPKEMGGNGVTESNPEQLFAAGYSACFNNALMHILKSDSKGTIEPEVSVTAYLLPDKNDGGVKLAAELDVTLTDMTQEEAETYVEKAHNYCPYSKALKESIDIEIQVSVN.

It belongs to the OsmC/Ohr family.

The protein is Organic hydroperoxide resistance protein-like 2 of Staphylococcus saprophyticus subsp. saprophyticus (strain ATCC 15305 / DSM 20229 / NCIMB 8711 / NCTC 7292 / S-41).